The following is a 430-amino-acid chain: MTTLTLNTSLLSSRRILAAFSGGLDSTVLLHQLVLWRERHPDVTLRAIHIHHGLSPHADSWVRHCETVCERWQVPLVVKRVTLADNGLGIEAHAREARYRAFAQTLLPGEVLATAQHLDDQCETFLLALKRGSGPAGLSAMGERSPFAGTLLLRPLLRETRKTLEQWAVHHGLCWIEDESNQDDAYDRNFLRLRALPLLQQRWPHFPAAVARSATLCAEQERLLDELLASDLTDCITTEGTLRLSPLMSMSDVRRAAILRRWLAMRNAPMPSRDALERIWQEVALARDDASPCLRFGDHEIRRYQSQLWWIKSVAGQHETTVAWPVWQTPLALPAGLGTVQLVPGGELRRPREEESVSIRFKAPGLLHIVGRHGGRKLKKIWQEQGIPPWRRDTTPLLFYGETLIAAAGVFVTREGAAEDKEGVSLVWHA.

21–26 (SGGLDS) serves as a coordination point for ATP.

It belongs to the tRNA(Ile)-lysidine synthase family.

The protein resides in the cytoplasm. The enzyme catalyses cytidine(34) in tRNA(Ile2) + L-lysine + ATP = lysidine(34) in tRNA(Ile2) + AMP + diphosphate + H(+). Functionally, ligates lysine onto the cytidine present at position 34 of the AUA codon-specific tRNA(Ile) that contains the anticodon CAU, in an ATP-dependent manner. Cytidine is converted to lysidine, thus changing the amino acid specificity of the tRNA from methionine to isoleucine. The polypeptide is tRNA(Ile)-lysidine synthase (Salmonella schwarzengrund (strain CVM19633)).